A 403-amino-acid polypeptide reads, in one-letter code: MPIQPFDQREWNEPMHSLRISVGGLPVLASMTKATDPRFRPRWRVILTSFVGAALLWLLYSHHQTPVSGRPPIHNAHNWRLRQERISQYNDTYPLSPPQRTPGGIRYRIAVIADLDTGSKAQEENTWFSYLKKGYLTLSDSGDRVSVEWDKDRGVLESHLAEKGRGMELSDLIVFNGKLYSVDDRTGVIYQIEGTKAVPWVILSDGDGAVEKGFKAEWLAVKDEHLYVGGLGKEWTTTTGEVVNENPEWVKVVGHRGSVEHENWVSSYNALRAAAGIQPPGYLIHESACWSDTLQRWFFLPRRASHERYSEREDERKGSNLLLSAAQDFRDISVRQVGALVPTHGFSSFKFIPNTDDQIIVALKSEEDNGRIATYVMAFTLDGRFLLPETKIGSVKYEGIEFI.

Topologically, residues 1–44 (MPIQPFDQREWNEPMHSLRISVGGLPVLASMTKATDPRFRPRWR) are cytoplasmic. The chain crosses the membrane as a helical; Signal-anchor for type II membrane protein span at residues 45-61 (VILTSFVGAALLWLLYS). At 62–403 (HHQTPVSGRP…SVKYEGIEFI (342 aa)) the chain is on the lumenal side. Asparagine 90 is a glycosylation site (N-linked (GlcNAc...) asparagine). Ca(2+)-binding residues include serine 170, aspartate 171, glutamate 217, glutamate 286, serine 347, and glutamate 398.

The protein belongs to the apyrase family. In terms of assembly, monomer. Homodimer; dimerization is Ca(2+)-dependent. The cofactor is Ca(2+). In terms of tissue distribution, detected in intestine, thymus, heart, lung, spleen, kidney, liver, testis, skeletal muscle and brain.

It localises to the endoplasmic reticulum membrane. The protein localises to the golgi apparatus. It is found in the golgi stack membrane. The enzyme catalyses a ribonucleoside 5'-diphosphate + H2O = a ribonucleoside 5'-phosphate + phosphate + H(+). Functionally, calcium-dependent nucleotidase with a preference for UDP. The order of activity with different substrates is UDP &gt; GDP &gt; IDP &gt;&gt; UTP &gt; CDP = GTP = ITP. Has very low activity towards ADP and even lower activity towards ATP. Does not hydrolyze AMP and GMP. Involved in proteoglycan synthesis. The protein is Soluble calcium-activated nucleotidase 1 (Cant1) of Rattus norvegicus (Rat).